Consider the following 867-residue polypeptide: V-set and immunoglobulin domain-containing protein 10-like (867 aa).

The signal sequence occupies residues 1-27 (MDNPQALPLFLLLASLVGILTLRASSG). The Extracellular portion of the chain corresponds to 28–776 (LQQTNFSSAF…RAGPTLSHGA (749 aa)). The N-linked (GlcNAc...) asparagine glycan is linked to Asn-32. Over residues 35–45 (SAFSSDSKSSS) the composition is skewed to low complexity. A disordered region spans residues 35–60 (SAFSSDSKSSSQGLGVEVPSIKPPSW). N-linked (GlcNAc...) asparagine glycans are attached at residues Asn-88, Asn-96, and Asn-144. The disordered stretch occupies residues 104–186 (LSPVSPFSET…PESKFSAETH (83 aa)). Polar residues predominate over residues 137-153 (TVKTPASNISTQVSHTK). Positions 159 to 170 (PDSKFSPDDMDL) are enriched in basic and acidic residues. The span at 173–186 (SAQSPESKFSAETH) shows a compositional bias: polar residues. 2 consecutive Ig-like C2-type domains span residues 302-394 (PQLS…ADVS) and 402-487 (PTIT…SLLN). The cysteines at positions 324 and 378 are disulfide-linked. A glycan (N-linked (GlcNAc...) asparagine) is linked at Asn-423. Cys-428 and Cys-471 are joined by a disulfide. Asn-487 carries an N-linked (GlcNAc...) asparagine glycan. The disordered stretch occupies residues 602-627 (ASGCPPPSRASWAREGRPLAPGGGSR). N-linked (GlcNAc...) asparagine glycans are attached at residues Asn-641 and Asn-650. The helical transmembrane segment at 777–797 (IAGIVLGSLLGLALLAVLLLL) threads the bilayer. The Cytoplasmic portion of the chain corresponds to 798 to 867 (CICCLCRFRG…QAQTPVQLSL (70 aa)).

Expressed in the esophagus, particularly in the suprabasilar layers of the epithelium. Expression is largely reduced in esophageal metaplasia, dysplasia, and adenocarcinoma lesions.

The protein resides in the membrane. This Homo sapiens (Human) protein is V-set and immunoglobulin domain-containing protein 10-like (VSIG10L).